We begin with the raw amino-acid sequence, 171 residues long: ATP synthase subunit b (171 aa).

The chain crosses the membrane as a helical span at residues 2-22 (FVVKMVLGFLILLSPLCATGL).

The protein belongs to the ATPase B chain family. F-type ATPases have 2 components, F(1) - the catalytic core - and F(0) - the membrane proton channel. F(1) has five subunits: alpha(3), beta(3), gamma(1), delta(1), epsilon(1). F(0) has three main subunits: a(1), b(2) and c(10-14). The alpha and beta chains form an alternating ring which encloses part of the gamma chain. F(1) is attached to F(0) by a central stalk formed by the gamma and epsilon chains, while a peripheral stalk is formed by the delta and b chains.

Its subcellular location is the cell inner membrane. In terms of biological role, f(1)F(0) ATP synthase produces ATP from ADP in the presence of a proton or sodium gradient. F-type ATPases consist of two structural domains, F(1) containing the extramembraneous catalytic core and F(0) containing the membrane proton channel, linked together by a central stalk and a peripheral stalk. During catalysis, ATP synthesis in the catalytic domain of F(1) is coupled via a rotary mechanism of the central stalk subunits to proton translocation. Component of the F(0) channel, it forms part of the peripheral stalk, linking F(1) to F(0). The protein is ATP synthase subunit b of Helicobacter pylori (strain G27).